Here is a 114-residue protein sequence, read N- to C-terminus: uncharacterized protein (114 aa).

The stretch at 31-72 (EFEKLVSEQMKTMDKLLDLQSELDRCKQIEAELRHLERDARL) forms a coiled coil.

This is an uncharacterized protein from Bacillus subtilis (strain 168).